We begin with the raw amino-acid sequence, 115 residues long: MNMLITMTVNSALSFCLISIAFWLPHLNIYTEKASPYECGFDPMSSARLPFSLKFFLVGITFLLFDLEIALLLPLPWAMHSPNTTTTMMVSFMFVSILALGLAYEWLNKGLEWTE.

3 consecutive transmembrane segments (helical) span residues 4-24 (LITMTVNSALSFCLISIAFWL), 55-75 (FFLVGITFLLFDLEIALLLPL), and 87-107 (TMMVSFMFVSILALGLAYEWL).

This sequence belongs to the complex I subunit 3 family. In terms of assembly, core subunit of respiratory chain NADH dehydrogenase (Complex I) which is composed of 45 different subunits. Interacts with TMEM186. Interacts with TMEM242.

It localises to the mitochondrion inner membrane. The enzyme catalyses a ubiquinone + NADH + 5 H(+)(in) = a ubiquinol + NAD(+) + 4 H(+)(out). In terms of biological role, core subunit of the mitochondrial membrane respiratory chain NADH dehydrogenase (Complex I) which catalyzes electron transfer from NADH through the respiratory chain, using ubiquinone as an electron acceptor. Essential for the catalytic activity of complex I. This chain is NADH-ubiquinone oxidoreductase chain 3, found in Notiomys edwardsii (Edwards's long-clawed mouse).